Here is a 728-residue protein sequence, read N- to C-terminus: Probable 3',5'-cyclic phosphodiesterase pde-5 (728 aa).

In terms of domain architecture, GAF spans 214–371; sequence SMDAVIIKVM…HHAKLYDKIR (158 aa). A PDEase domain is found at 390-709; the sequence is CNADEVNKLK…KKWEELAEEQ (320 aa). Catalysis depends on histidine 465, which acts as the Proton donor. The a divalent metal cation site is built by histidine 469, histidine 503, aspartate 504, and aspartate 614. A coiled-coil region spans residues 691 to 728; it reads MRERCEYNAKKWEELAEEQRKKQEALAQQNGEANETQE. The tract at residues 708-728 is disordered; that stretch reads EQRKKQEALAQQNGEANETQE. A compositionally biased stretch (polar residues) spans 716–728; that stretch reads LAQQNGEANETQE.

The protein belongs to the cyclic nucleotide phosphodiesterase family. A divalent metal cation serves as cofactor.

It carries out the reaction a nucleoside 3',5'-cyclic phosphate + H2O = a nucleoside 5'-phosphate + H(+). In terms of biological role, redundantly with pde-1, plays a role in the AFD thermosensory neurons to regulate microvilli receptive ending morphology, possibly by regulating cGMP levels. The polypeptide is Probable 3',5'-cyclic phosphodiesterase pde-5 (pde-5) (Caenorhabditis elegans).